The chain runs to 339 residues: N-acetyl-gamma-glutamyl-phosphate reductase (339 aa).

C145 is a catalytic residue.

It belongs to the NAGSA dehydrogenase family. Type 1 subfamily.

It localises to the cytoplasm. It carries out the reaction N-acetyl-L-glutamate 5-semialdehyde + phosphate + NADP(+) = N-acetyl-L-glutamyl 5-phosphate + NADPH + H(+). It functions in the pathway amino-acid biosynthesis; L-arginine biosynthesis; N(2)-acetyl-L-ornithine from L-glutamate: step 3/4. In terms of biological role, catalyzes the NADPH-dependent reduction of N-acetyl-5-glutamyl phosphate to yield N-acetyl-L-glutamate 5-semialdehyde. In Thermotoga sp. (strain RQ2), this protein is N-acetyl-gamma-glutamyl-phosphate reductase.